The following is a 90-amino-acid chain: N(2)-fixation sustaining protein CowN (90 aa).

It belongs to the CowN family.

Functionally, is required to sustain N(2)-dependent growth in the presence of low levels of carbon monoxide (CO). Probably acts by protecting the N(2) fixation ability of the nitrogenase complex, which is inactivated in the presence of CO. The protein is N(2)-fixation sustaining protein CowN of Methylocella silvestris (strain DSM 15510 / CIP 108128 / LMG 27833 / NCIMB 13906 / BL2).